The following is a 336-amino-acid chain: Ribosomal RNA large subunit methyltransferase F (336 aa).

The protein belongs to the methyltransferase superfamily. METTL16/RlmF family.

The protein resides in the cytoplasm. The catalysed reaction is adenosine(1618) in 23S rRNA + S-adenosyl-L-methionine = N(6)-methyladenosine(1618) in 23S rRNA + S-adenosyl-L-homocysteine + H(+). In terms of biological role, specifically methylates the adenine in position 1618 of 23S rRNA. In Serratia proteamaculans (strain 568), this protein is Ribosomal RNA large subunit methyltransferase F.